Consider the following 350-residue polypeptide: Vancomycin C-type resistance protein VanC2 (350 aa).

Active-site residues include Glu-14 and Ser-187. The ATP-grasp domain maps to 141–343 (HQAAAAIGVQ…YQELLQKLLV (203 aa)). 171–226 (IQTHGFPVFFKPNEAGSSKGITKVTCVEEIASALKEAFTYCSAVLLQKNIAGVEIG) is an ATP binding site. Residues Asp-297, Glu-310, and Asn-312 each contribute to the Mg(2+) site. Positions 297, 310, and 312 each coordinate Mn(2+). The active site involves Ser-321.

It belongs to the D-alanine--D-alanine ligase family. As to quaternary structure, homodimer. Mg(2+) is required as a cofactor. It depends on Mn(2+) as a cofactor.

It localises to the cell membrane. It catalyses the reaction D-serine + D-alanine + ATP = D-alanyl-D-serine + ADP + phosphate + H(+). Its pathway is cell wall biogenesis; peptidoglycan biosynthesis. Its activity is regulated as follows. Inhibited by D-cycloserine. In terms of biological role, required for low-level resistance to the glycopeptide antibiotic vancomycin. D-alanine--D-alanine ligase of altered specificity, which catalyzes synthesis of D-Ala-D-Ser; produces a peptidoglycan which does not terminate in D-alanine but in D-serine, thus probably reducing affinity for vancomycin. Only insignificant catalytic synthesis of D-Ala-D-Ala in vitro. In Enterococcus casseliflavus (Enterococcus flavescens), this protein is Vancomycin C-type resistance protein VanC2.